The following is a 304-amino-acid chain: uncharacterized protein (304 aa).

The first 22 residues, methionine 1 to serine 22, serve as a signal peptide directing secretion. The disordered stretch occupies residues proline 91–serine 111. 4 N-linked (GlcNAc...) asparagine glycosylation sites follow: asparagine 133, asparagine 160, asparagine 183, and asparagine 233. Serine 282 is lipidated: GPI-anchor amidated serine. Positions serine 283–leucine 304 are cleaved as a propeptide — removed in mature form.

The protein localises to the cell membrane. This is an uncharacterized protein from Arabidopsis thaliana (Mouse-ear cress).